We begin with the raw amino-acid sequence, 478 residues long: Cysteine--tRNA ligase (478 aa).

Cysteine 29 is a binding site for Zn(2+). The 'HIGH' region signature appears at 31 to 41; that stretch reads ATVQSIPHIGH. 3 residues coordinate Zn(2+): cysteine 207, histidine 232, and glutamate 236. A 'KMSKS' region motif is present at residues 263–267; sequence KMSKS. Residue lysine 266 coordinates ATP.

This sequence belongs to the class-I aminoacyl-tRNA synthetase family. In terms of assembly, monomer. Zn(2+) serves as cofactor.

It localises to the cytoplasm. It catalyses the reaction tRNA(Cys) + L-cysteine + ATP = L-cysteinyl-tRNA(Cys) + AMP + diphosphate. This Corynebacterium jeikeium (strain K411) protein is Cysteine--tRNA ligase.